The following is a 153-amino-acid chain: Ubiquitin-conjugating enzyme E2 ubc-18 (153 aa).

A UBC core domain is found at 2 to 149 (SATRRLQKEL…AEEHTRKHAE (148 aa)). Cys86 functions as the Glycyl thioester intermediate in the catalytic mechanism.

Belongs to the ubiquitin-conjugating enzyme family. In terms of assembly, interacts with E3 ubiquitin-protein ligase wwp-1. Interacts with RBR-type E3 ubiquitin transferase ari-1.1. In terms of tissue distribution, expressed in neurons localized in the head and tail of adults.

The catalysed reaction is S-ubiquitinyl-[E1 ubiquitin-activating enzyme]-L-cysteine + [E2 ubiquitin-conjugating enzyme]-L-cysteine = [E1 ubiquitin-activating enzyme]-L-cysteine + S-ubiquitinyl-[E2 ubiquitin-conjugating enzyme]-L-cysteine.. In terms of biological role, ubiquitin-conjugating enzyme E2. Accepts ubiquitin from the E1 complex and catalyzes its covalent attachment to other proteins. Required for diet restriction-mediated lifespan extension, probably acting as part of a complex with ubiquitin-protein ligase wwp-1. Acts redundantly with lin-35/Rb in the regulation of pharyngeal morphogenesis during embryonic development by negatively regulating the expression of proteins such as sup-35. The sequence is that of Ubiquitin-conjugating enzyme E2 ubc-18 from Caenorhabditis elegans.